A 221-amino-acid polypeptide reads, in one-letter code: UPF0502 protein PSPA7_1674 (221 aa).

It belongs to the UPF0502 family.

The polypeptide is UPF0502 protein PSPA7_1674 (Pseudomonas paraeruginosa (strain DSM 24068 / PA7) (Pseudomonas aeruginosa (strain PA7))).